A 172-amino-acid chain; its full sequence is ATP synthase subunit b (172 aa).

The chain crosses the membrane as a helical span at residues 12–32; sequence VGFNAGTMLFQLVAMLILLAL.

This sequence belongs to the ATPase B chain family. In terms of assembly, F-type ATPases have 2 components, F(1) - the catalytic core - and F(0) - the membrane proton channel. F(1) has five subunits: alpha(3), beta(3), gamma(1), delta(1), epsilon(1). F(0) has three main subunits: a(1), b(2) and c(10-14). The alpha and beta chains form an alternating ring which encloses part of the gamma chain. F(1) is attached to F(0) by a central stalk formed by the gamma and epsilon chains, while a peripheral stalk is formed by the delta and b chains.

It localises to the cell membrane. In terms of biological role, f(1)F(0) ATP synthase produces ATP from ADP in the presence of a proton or sodium gradient. F-type ATPases consist of two structural domains, F(1) containing the extramembraneous catalytic core and F(0) containing the membrane proton channel, linked together by a central stalk and a peripheral stalk. During catalysis, ATP synthesis in the catalytic domain of F(1) is coupled via a rotary mechanism of the central stalk subunits to proton translocation. Its function is as follows. Component of the F(0) channel, it forms part of the peripheral stalk, linking F(1) to F(0). This is ATP synthase subunit b from Bacillus licheniformis (strain ATCC 14580 / DSM 13 / JCM 2505 / CCUG 7422 / NBRC 12200 / NCIMB 9375 / NCTC 10341 / NRRL NRS-1264 / Gibson 46).